The following is a 35-amino-acid chain: Photosystem II reaction center protein T (35 aa).

The chain crosses the membrane as a helical span at residues 3 to 23 (ALVYTFLLXSTLGIIFFAIFF).

It belongs to the PsbT family. As to quaternary structure, PSII is composed of 1 copy each of membrane proteins PsbA, PsbB, PsbC, PsbD, PsbE, PsbF, PsbH, PsbI, PsbJ, PsbK, PsbL, PsbM, PsbT, PsbY, PsbZ, Psb30/Ycf12, at least 3 peripheral proteins of the oxygen-evolving complex and a large number of cofactors. It forms dimeric complexes.

The protein localises to the plastid. The protein resides in the chloroplast thylakoid membrane. Its function is as follows. Found at the monomer-monomer interface of the photosystem II (PS II) dimer, plays a role in assembly and dimerization of PSII. PSII is a light-driven water plastoquinone oxidoreductase, using light energy to abstract electrons from H(2)O, generating a proton gradient subsequently used for ATP formation. This Cunninghamia lanceolata (China fir) protein is Photosystem II reaction center protein T.